We begin with the raw amino-acid sequence, 949 residues long: Glycine dehydrogenase (decarboxylating) (949 aa).

K700 is subject to N6-(pyridoxal phosphate)lysine.

Belongs to the GcvP family. The glycine cleavage system is composed of four proteins: P, T, L and H. It depends on pyridoxal 5'-phosphate as a cofactor.

The enzyme catalyses N(6)-[(R)-lipoyl]-L-lysyl-[glycine-cleavage complex H protein] + glycine + H(+) = N(6)-[(R)-S(8)-aminomethyldihydrolipoyl]-L-lysyl-[glycine-cleavage complex H protein] + CO2. Its function is as follows. The glycine cleavage system catalyzes the degradation of glycine. The P protein binds the alpha-amino group of glycine through its pyridoxal phosphate cofactor; CO(2) is released and the remaining methylamine moiety is then transferred to the lipoamide cofactor of the H protein. In Flavobacterium johnsoniae (strain ATCC 17061 / DSM 2064 / JCM 8514 / BCRC 14874 / CCUG 350202 / NBRC 14942 / NCIMB 11054 / UW101) (Cytophaga johnsonae), this protein is Glycine dehydrogenase (decarboxylating).